We begin with the raw amino-acid sequence, 243 residues long: Tegument protein UL14 homolog (243 aa).

This sequence belongs to the alphaherpesvirinae HHV-1 UL14 protein family. Phosphorylated.

Its subcellular location is the virion tegument. It localises to the host cytoplasm. The protein resides in the host nucleus. Functionally, contributes to the nuclear transport of the viral transcriptional activator VP16 homolog during the early phase of infection. Therefore, participates indirectly in the regulation of the immediate-early gene expression. Additionally, seems to be important for efficient nuclear targeting of capsids. In Gallid herpesvirus 2 (strain Chicken/Md5/ATCC VR-987) (GaHV-2), this protein is Tegument protein UL14 homolog (MDV026).